The sequence spans 255 residues: tRNA (guanine-N(1)-)-methyltransferase (255 aa).

Residues Gly113 and 133-138 (IGDYVL) contribute to the S-adenosyl-L-methionine site.

This sequence belongs to the RNA methyltransferase TrmD family. In terms of assembly, homodimer.

Its subcellular location is the cytoplasm. The catalysed reaction is guanosine(37) in tRNA + S-adenosyl-L-methionine = N(1)-methylguanosine(37) in tRNA + S-adenosyl-L-homocysteine + H(+). Specifically methylates guanosine-37 in various tRNAs. The sequence is that of tRNA (guanine-N(1)-)-methyltransferase from Mannheimia succiniciproducens (strain KCTC 0769BP / MBEL55E).